The primary structure comprises 282 residues: Pyridoxal 5'-phosphate synthase subunit PdxS (282 aa).

D14 is a binding site for D-ribose 5-phosphate. The active-site Schiff-base intermediate with D-ribose 5-phosphate is K71. G143 contacts D-ribose 5-phosphate. R155 contacts D-glyceraldehyde 3-phosphate. D-ribose 5-phosphate is bound by residues G204 and 225 to 226 (GS).

The protein belongs to the PdxS/SNZ family. As to quaternary structure, in the presence of PdxT, forms a dodecamer of heterodimers.

It catalyses the reaction aldehydo-D-ribose 5-phosphate + D-glyceraldehyde 3-phosphate + L-glutamine = pyridoxal 5'-phosphate + L-glutamate + phosphate + 3 H2O + H(+). Its pathway is cofactor biosynthesis; pyridoxal 5'-phosphate biosynthesis. Functionally, catalyzes the formation of pyridoxal 5'-phosphate from ribose 5-phosphate (RBP), glyceraldehyde 3-phosphate (G3P) and ammonia. The ammonia is provided by the PdxT subunit. Can also use ribulose 5-phosphate and dihydroxyacetone phosphate as substrates, resulting from enzyme-catalyzed isomerization of RBP and G3P, respectively. The chain is Pyridoxal 5'-phosphate synthase subunit PdxS from Treponema denticola (strain ATCC 35405 / DSM 14222 / CIP 103919 / JCM 8153 / KCTC 15104).